A 149-amino-acid chain; its full sequence is Heavy metal-associated isoprenylated plant protein 21 (149 aa).

The HMA domain maps to 25 to 88; sequence LQTVDIKVKM…RVKSTGKKAE (64 aa). A metal cation-binding residues include Cys-36 and Cys-39. At Cys-146 the chain carries Cysteine methyl ester. The S-farnesyl cysteine moiety is linked to residue Cys-146. The propeptide at 147-149 is removed in mature form; it reads SIM.

It belongs to the HIPP family. As to quaternary structure, interacts with ZHD11/HB29. In terms of tissue distribution, expressed at low levels in leaves and sepals.

The protein resides in the membrane. In terms of biological role, heavy-metal-binding protein. Binds cadmium. May be involved in cadmium transport and play a role in cadmium detoxification. The protein is Heavy metal-associated isoprenylated plant protein 21 of Arabidopsis thaliana (Mouse-ear cress).